A 366-amino-acid polypeptide reads, in one-letter code: NADP-dependent oxidoreductase domain-containing protein 1 (366 aa).

Belongs to the pyrroline-5-carboxylate reductase family.

Functionally, probable oxidoreductase. This Mus musculus (Mouse) protein is NADP-dependent oxidoreductase domain-containing protein 1 (Noxred1).